A 1243-amino-acid polypeptide reads, in one-letter code: Probable phospholipid-transporting ATPase 7 (1243 aa).

Topologically, residues 1-74 (MGRRRIRSRI…TTRYNLITFL (74 aa)) are cytoplasmic. The chain crosses the membrane as a helical span at residues 75–96 (PKCLYEQFHRVANFYFLVAAIL). The Extracellular segment spans residues 97–100 (SVFP). Residues 101 to 123 (LSPFNKWSMIAPLIFVVGLSMGK) traverse the membrane as a helical segment. Over 124–305 (EALEDWRRFM…SRIEKRMDYI (182 aa)) the chain is Cytoplasmic. A helical membrane pass occupies residues 306–327 (IYTLFALLVLVSFISSLGFAVM). Topologically, residues 328–359 (TKMHMGDWWYLRPDKPERLTNPRNPFHAWVVH) are extracellular. The helical transmembrane segment at 360 to 377 (LITAVLLYGYLIPISLYV) threads the bilayer. Over 378–941 (SIELVKVLQA…HGHWCYKRIA (564 aa)) the chain is Cytoplasmic. Residue Asp-425 is the 4-aspartylphosphate intermediate of the active site. Lys-623 participates in a covalent cross-link: Glycyl lysine isopeptide (Lys-Gly) (interchain with G-Cter in ubiquitin). Mg(2+) is bound by residues Asp-886 and Asp-890. The chain crosses the membrane as a helical span at residues 942–961 (QMICYFFYKNITFGLTLFYF). The Extracellular portion of the chain corresponds to 962 to 975 (EAFTGFSGQAIYND). A helical membrane pass occupies residues 976–995 (SYLLLFNVILTSLPVIALGV). The Cytoplasmic portion of the chain corresponds to 996 to 1025 (FEQDVSSEVCLQFPALYQQGPKNLFFDWYR). A helical membrane pass occupies residues 1026 to 1048 (IIGWMANGVYASVVIFSLNIGIF). The Extracellular portion of the chain corresponds to 1049–1061 (HVQSFCSGGQTAD). A helical transmembrane segment spans residues 1062–1084 (MDAMGTAMFTCIIWAVNVQIALT). Residues 1085 to 1090 (MSHFTW) lie on the Cytoplasmic side of the membrane. The helical transmembrane segment at 1091–1111 (IQHVLIWGSIVTWYIFLALFG) threads the bilayer. Residues 1112 to 1128 (MLPPKVSGNIFHMLSET) are Extracellular-facing. Residues 1129–1153 (LAPAPIFWLTSLLVIAATTLPYLAY) form a helical membrane-spanning segment. Topologically, residues 1154–1243 (ISFQRSLNPL…TDTTSTTQHS (90 aa)) are cytoplasmic.

The protein belongs to the cation transport ATPase (P-type) (TC 3.A.3) family. Type IV subfamily.

It is found in the cell membrane. It localises to the endomembrane system. It catalyses the reaction ATP + H2O + phospholipidSide 1 = ADP + phosphate + phospholipidSide 2.. In terms of biological role, involved in transport of phospholipids and in regulation of pollen plasma membrane lipid asymmetry. The protein is Probable phospholipid-transporting ATPase 7 of Arabidopsis thaliana (Mouse-ear cress).